The chain runs to 364 residues: Transposase for insertion sequence element IS1111A (364 aa).

It belongs to the transposase IS1111A/IS1328/IS1533 family.

Required for the transposition of the insertion element. This Coxiella burnetii (strain RSA 493 / Nine Mile phase I) protein is Transposase for insertion sequence element IS1111A.